A 298-amino-acid polypeptide reads, in one-letter code: GTP cyclohydrolase FolE2 (298 aa).

Belongs to the GTP cyclohydrolase IV family.

It carries out the reaction GTP + H2O = 7,8-dihydroneopterin 3'-triphosphate + formate + H(+). The protein operates within cofactor biosynthesis; 7,8-dihydroneopterin triphosphate biosynthesis; 7,8-dihydroneopterin triphosphate from GTP: step 1/1. Functionally, converts GTP to 7,8-dihydroneopterin triphosphate. The protein is GTP cyclohydrolase FolE2 of Xylella fastidiosa (strain 9a5c).